The sequence spans 656 residues: Protein terminal ear1 (656 aa).

Residues 211 to 283 enclose the RRM domain; it reads SLVVLSPLPG…RRLVVEFTRP (73 aa). Disordered stretches follow at residues 280 to 408 and 576 to 656; these read FTRP…WKGR and LTDP…GYDD. Over residues 288–299 the composition is skewed to basic residues; that stretch reads PRRRGYAPHQHR. The span at 314 to 331 shows a compositional bias: low complexity; it reads PSQPTSSQPPASSSSSGS. Residues 346–358 show a composition bias toward polar residues; sequence CKSSAGSDQSSKG. Low complexity-rich tracts occupy residues 377–397, 585–601, and 612–630; these read AAAAASSSTPTASGKQTQKGV, RSPAASSASSPPKSRAA, and PAPSSSADGASSTTTSTHA. Over residues 642-656 the composition is skewed to basic and acidic residues; the sequence is DIRLAGELRRLGYDD.

As to expression, expressed below the shoot tip down the flanks of shoot apex in an alternating pattern. Not expressed in root tips, leaves or immature ears (female inflorescences).

Its function is as follows. Probable RNA-binding protein. Involved in the regulation of leaf initiation rate and shoot development. Seems to act more predominantly in the early stages of the leaf development, rather than in the later phase. This is Protein terminal ear1 (TE1) from Zea mays (Maize).